Consider the following 102-residue polypeptide: MEIGISHYLTVSAILFTLGVFGIFLNRKNVIIILMSVELILLAVNINMVAFSAFLNDITGQVFALFILTVAAAEAAIGLAILVVFYRNRGSIAVEDVNMMKG.

3 helical membrane-spanning segments follow: residues 5 to 25 (ISHYLTVSAILFTLGVFGIFL), 31 to 51 (IIILMSVELILLAVNINMVAF), and 65 to 85 (LFILTVAAAEAAIGLAILVVF).

Belongs to the complex I subunit 4L family. In terms of assembly, NDH-1 is composed of 14 different subunits. Subunits NuoA, H, J, K, L, M, N constitute the membrane sector of the complex.

It is found in the cell inner membrane. It catalyses the reaction a quinone + NADH + 5 H(+)(in) = a quinol + NAD(+) + 4 H(+)(out). In terms of biological role, NDH-1 shuttles electrons from NADH, via FMN and iron-sulfur (Fe-S) centers, to quinones in the respiratory chain. The immediate electron acceptor for the enzyme in this species is believed to be ubiquinone. Couples the redox reaction to proton translocation (for every two electrons transferred, four hydrogen ions are translocated across the cytoplasmic membrane), and thus conserves the redox energy in a proton gradient. This chain is NADH-quinone oxidoreductase subunit K 1, found in Rhizobium meliloti (strain 1021) (Ensifer meliloti).